The sequence spans 263 residues: 4-hydroxy-tetrahydrodipicolinate reductase (263 aa).

NAD(+) is bound by residues 8–13, Asp34, 97–99, and 123–126; these read GACGKM, GTT, and APNF. His153 serves as the catalytic Proton donor/acceptor. (S)-2,3,4,5-tetrahydrodipicolinate is bound at residue His154. The active-site Proton donor is Lys157. Residue 163–164 coordinates (S)-2,3,4,5-tetrahydrodipicolinate; it reads GT.

It belongs to the DapB family.

The protein resides in the cytoplasm. It catalyses the reaction (S)-2,3,4,5-tetrahydrodipicolinate + NAD(+) + H2O = (2S,4S)-4-hydroxy-2,3,4,5-tetrahydrodipicolinate + NADH + H(+). The enzyme catalyses (S)-2,3,4,5-tetrahydrodipicolinate + NADP(+) + H2O = (2S,4S)-4-hydroxy-2,3,4,5-tetrahydrodipicolinate + NADPH + H(+). The protein operates within amino-acid biosynthesis; L-lysine biosynthesis via DAP pathway; (S)-tetrahydrodipicolinate from L-aspartate: step 4/4. Functionally, catalyzes the conversion of 4-hydroxy-tetrahydrodipicolinate (HTPA) to tetrahydrodipicolinate. The sequence is that of 4-hydroxy-tetrahydrodipicolinate reductase from Carboxydothermus hydrogenoformans (strain ATCC BAA-161 / DSM 6008 / Z-2901).